We begin with the raw amino-acid sequence, 433 residues long: MTTTIRQFTSSSSIKGSSGLGGGSSRTSCRLSGSLGAGSCRLGSASGLGSALGGNSYSSCYSFGTGSGYGGNFGGVDGLLAGGEKATMQNLNDRLASYLDKVRALEEANTELEVKIRDWYQKQAPGPARDYSAYYQTIEDLKNKILVATVDNASILLQIDNARLAADDFRTKFETEQALRMSVEADINGLRRVLDELTLARADLEMQIENLKEELAYLKKNHEEEMNALRGQVGGEINVEMDAAPGVDLSRILSEMRDQYEKMAEKNRKDAEDWFFSKTEELNREVATNSELVQSGKSEISELRRTMQALEIELQSQLSMKASLEGSLAETENRYCVQLSQIQGLIGSVEEQLAQLRCEMEQQNQEYKILLDVKTRLEQEIATYRRLLEGEDAHLTQYKPKEPVTTRQVRTIVEEVQDGKVISSREQVHQTTR.

Residues 1–24 form a disordered region; the sequence is MTTTIRQFTSSSSIKGSSGLGGGS. A head region spans residues 1 to 83; sequence MTTTIRQFTS…GGVDGLLAGG (83 aa). Residues Ser12 and Ser13 each carry the phosphoserine modification. Lys15 participates in a covalent cross-link: Glycyl lysine isopeptide (Lys-Gly) (interchain with G-Cter in SUMO1); alternate. Residue Lys15 forms a Glycyl lysine isopeptide (Lys-Gly) (interchain with G-Cter in SUMO2); alternate linkage. Residues Ser25, Ser32, Ser34, and Ser39 each carry the phosphoserine modification. Position 44 is a phosphoserine; by RPS6KA1 (Ser44). The tract at residues 84 to 120 is coil 1A; sequence EKATMQNLNDRLASYLDKVRALEEANTELEVKIRDWY. An IF rod domain is found at 84 to 395; it reads EKATMQNLND…RLLEGEDAHL (312 aa). Residue Thr110 is modified to Phosphothreonine. A linker 1 region spans residues 121 to 138; the sequence is QKQAPGPARDYSAYYQTI. The tract at residues 139–230 is coil 1B; that stretch reads EDLKNKILVA…NHEEEMNALR (92 aa). The segment at 231-250 is linker 12; sequence GQVGGEINVEMDAAPGVDLS. The tract at residues 251–392 is coil 2; it reads RILSEMRDQY…TYRRLLEGED (142 aa). Lys278 is covalently cross-linked (Glycyl lysine isopeptide (Lys-Gly) (interchain with G-Cter in SUMO2)). Thr279 is subject to Phosphothreonine. Position 323 is a phosphoserine (Ser323). Residues 393 to 433 form a tail region; the sequence is AHLTQYKPKEPVTTRQVRTIVEEVQDGKVISSREQVHQTTR. Residues Lys399, Lys401, and Lys420 each participate in a glycyl lysine isopeptide (Lys-Gly) (interchain with G-Cter in SUMO1); alternate cross-link. Glycyl lysine isopeptide (Lys-Gly) (interchain with G-Cter in SUMO2); alternate cross-links involve residues Lys399, Lys401, and Lys420.

The protein belongs to the intermediate filament family. Heterodimer of a type I and a type II keratin. KRT17 associates with KRT6 isomers (KRT6A or KRT6B). Interacts with TRADD and SFN. In terms of processing, phosphorylation at Ser-44 occurs in a growth- and stress-dependent fashion in skin keratinocytes, it has no effect on filament organization.

Its subcellular location is the cytoplasm. Type I keratin involved in the formation and maintenance of various skin appendages, specifically in determining shape and orientation of hair. Required for the correct growth of hair follicles, in particular for the persistence of the anagen (growth) state. Modulates the function of TNF-alpha in the specific context of hair cycling. Regulates protein synthesis and epithelial cell growth through binding to the adapter protein SFN and by stimulating Akt/mTOR pathway. Involved in tissue repair. May be a marker of basal cell differentiation in complex epithelia and therefore indicative of a certain type of epithelial 'stem cells'. Acts as a promoter of epithelial proliferation by acting a regulator of immune response in skin: promotes Th1/Th17-dominated immune environment contributing to the development of basaloid skin tumors. May act as an autoantigen in the immunopathogenesis of psoriasis, with certain peptide regions being a major target for autoreactive T-cells and hence causing their proliferation. In Rattus norvegicus (Rat), this protein is Keratin, type I cytoskeletal 17.